Consider the following 189-residue polypeptide: Early E3 20.5 kDa glycoprotein (189 aa).

Residues N73 and N137 are each glycosylated (N-linked (GlcNAc...) asparagine; by host).

This sequence belongs to the adenoviridae E3_20 family.

Functionally, E3 proteins seem to be dispensable for virus growth in tissue culture cells. They are potentially important for virus growth under special conditions; E3 region may help adenoviruses to evade the immune surveillance of the host. In Homo sapiens (Human), this protein is Early E3 20.5 kDa glycoprotein.